A 373-amino-acid chain; its full sequence is Transcription factor NF-E2 45 kDa subunit (373 aa).

Disordered stretches follow at residues M1 to G22 and L40 to L60. The interval M1–Y83 is required for interaction with MAPK8. The segment at M1–E206 is transactivation domain. 2 consecutive short sequence motifs (PXY motif) follow at residues P61 to Y65 and P79 to Y83. Residues L131–T163 form a disordered region. S157 bears the Phosphoserine; by MAPK8 mark. S170 is modified (phosphoserine; by PKA). The segment at E206–R225 is disordered. The bZIP domain maps to L266–L329. Positions R268–K287 are basic motif. Residues I291 to L298 form a leucine-zipper region. A Glycyl lysine isopeptide (Lys-Gly) (interchain with G-Cter in SUMO); alternate cross-link involves residue K368. Residue K368 forms a Glycyl lysine isopeptide (Lys-Gly) (interchain with G-Cter in SUMO1); alternate linkage.

The protein belongs to the bZIP family. CNC subfamily. Homodimer; can bind DNA as a homodimer. Erythroid transcription activator nuclear factor erythroid-derived 2 (NF-E2), composed of a heterodimer of NFE2 and MAFK, possesses transactivation activity on beta-globin. Also forms high affinity heterodimer with MAFG; the interaction promotes erythropoiesis. Interacts (via the PXY motif 1) with ITCH (via the WW 1 domain); the interaction promotes 'Lys63'-linked ubiquitination of NFE2, translocates it to the cytoplasm and inhibits its transactivation activity. Interacts with KMT2D/MLL2; the interaction promotes transactivation of the beta-globin locus. Interacts with MAPK8 (phosphorylated form); the interaction leads to phosphorylation of NFE2 in undifferentiated cells. Post-translationally, phosphorylated on serine residues. In undifferentiated erythrocytes, phosphorylated by MAPK8 which then leads to ubiquitination and protein degradation. In terms of processing, sumoylated. Sumoylation is required for translocation to nuclear bodies PODs, anchoring to the gene loci, and transactivation of the beta-globin gene. Ubiquitinated mainly by 'Lys63'-linked ubiquitin. Polyubiquitination with 'Lys63'-linked ubiquitin by ITCH retains NFE2 in the cytoplasm preventing its transactivation activity. In undifferentiated erythrocyte, ubiquitinated after MAPK8-mediatd phosphorylation leading to protein degradation.

Its subcellular location is the nucleus. It localises to the PML body. The protein resides in the cytoplasm. Functionally, component of the NF-E2 complex essential for regulating erythroid and megakaryocytic maturation and differentiation. Binds to the hypersensitive site 2 (HS2) of the beta-globin control region (LCR). This subunit (NFE2) recognizes the TCAT/C sequence of the AP-1-like core palindrome present in a number of erythroid and megakaryocytic gene promoters. Requires MAFK or other small MAF proteins for binding to the NF-E2 motif. May play a role in all aspects of hemoglobin production from globin and heme synthesis to procurement of iron. This chain is Transcription factor NF-E2 45 kDa subunit (Nfe2), found in Rattus norvegicus (Rat).